Consider the following 294-residue polypeptide: PAK4-inhibitor INKA2 (294 aa).

Disordered stretches follow at residues isoleucine 50–methionine 143, proline 170–glycine 198, and leucine 223–threonine 290. Polar residues predominate over residues serine 85–lysine 99. The tract at residues glutamate 134 to glutamate 177 is inka box. Residues glutamate 171–glycine 198 are compositionally biased toward basic and acidic residues. Over residues arginine 241–glycine 253 the composition is skewed to basic residues.

Belongs to the INKA family. Interacts with PAK4.

The protein localises to the nucleus. Functionally, inhibitor of the serine/threonine-protein kinase PAK4. Acts by binding PAK4 in a substrate-like manner, inhibiting the protein kinase activity. This Bos taurus (Bovine) protein is PAK4-inhibitor INKA2.